The primary structure comprises 295 residues: Phosphoribosylaminoimidazole-succinocarboxamide synthase (295 aa).

It belongs to the SAICAR synthetase family.

The catalysed reaction is 5-amino-1-(5-phospho-D-ribosyl)imidazole-4-carboxylate + L-aspartate + ATP = (2S)-2-[5-amino-1-(5-phospho-beta-D-ribosyl)imidazole-4-carboxamido]succinate + ADP + phosphate + 2 H(+). Its pathway is purine metabolism; IMP biosynthesis via de novo pathway; 5-amino-1-(5-phospho-D-ribosyl)imidazole-4-carboxamide from 5-amino-1-(5-phospho-D-ribosyl)imidazole-4-carboxylate: step 1/2. This chain is Phosphoribosylaminoimidazole-succinocarboxamide synthase, found in Corynebacterium ammoniagenes (Brevibacterium ammoniagenes).